Here is a 473-residue protein sequence, read N- to C-terminus: Rop guanine nucleotide exchange factor 3 (473 aa).

Residues 1–28 (MENLSNPDENDDHQSPRSIDQNDQSAVE) are disordered. Over residues 16–28 (PRSIDQNDQSAVE) the composition is skewed to polar residues. The 379-residue stretch at 95–473 (LVVQEISEPE…YVDKTMRGSE (379 aa)) folds into the PRONE domain.

Functionally, guanine-nucleotide exchange factor (GEF) that acts as an activator of Rop (Rho of plants) GTPases by promoting the exchange of GDP for GTP. The chain is Rop guanine nucleotide exchange factor 3 (ROPGEF3) from Arabidopsis thaliana (Mouse-ear cress).